The sequence spans 131 residues: Histone H2A (131 aa).

A disordered region spans residues 1-24 (MSSGGKGKASSETKSSSRSSKAGL). An N6-acetyllysine mark is found at K6 and K8. Over residues 8–23 (KASSETKSSSRSSKAG) the composition is skewed to low complexity. Residue Q105 is modified to N5-methylglutamine. At S128 the chain carries Phosphoserine. The [ST]-Q motif signature appears at 128 to 129 (SQ).

This sequence belongs to the histone H2A family. As to quaternary structure, the nucleosome is a histone octamer containing two molecules each of H2A, H2B, H3 and H4 assembled in one H3-H4 heterotetramer and two H2A-H2B heterodimers. The octamer wraps approximately 147 bp of DNA. In terms of processing, phosphorylated to form H2AS128ph (gamma-H2A) in response to DNA double-strand breaks (DSBs) generated by exogenous genotoxic agents and by stalled replication forks. Phosphorylation is dependent on the DNA damage checkpoint kinases MEC1/ATR and TEL1/ATM, spreads on either side of a detected DSB site and may mark the surrounding chromatin for recruitment of proteins required for DNA damage signaling and repair. Gamma-H2A is removed from the DNA prior to the strand invasion-primer extension step of the repair process and subsequently dephosphorylated. Dephosphorylation is necessary for efficient recovery from the DNA damage checkpoint. Post-translationally, acetylated by ESA1 to form H2AK4ac and H2AK7ac.

Its subcellular location is the nucleus. The protein localises to the chromosome. In terms of biological role, core component of nucleosome which plays a central role in DNA double strand break (DSB) repair. Nucleosomes wrap and compact DNA into chromatin, limiting DNA accessibility to the cellular machineries which require DNA as a template. Histones thereby play a central role in transcription regulation, DNA repair, DNA replication and chromosomal stability. DNA accessibility is regulated via a complex set of post-translational modifications of histones, also called histone code, and nucleosome remodeling. This Cryptococcus neoformans var. neoformans serotype D (strain B-3501A) (Filobasidiella neoformans) protein is Histone H2A (HTA1).